Reading from the N-terminus, the 534-residue chain is Putative ammonium transporter 1 (534 aa).

The next 11 membrane-spanning stretches (helical) occupy residues 31–51, 69–89, 115–135, 139–159, 184–204, 223–243, 263–283, 291–311, 318–338, 346–366, and 401–421; these read SFFLCSMALIIFFMQCGFAYL, LLDSCICIIGYWAIGWALAYG, FFFQYVFSATAATIVSGAVAE, FITYVTYCTVISTFIYPVLTH, FAGSGLVHLCGGSISFLAAWI, ILGHSVPFTALGGFILMFGFL, ALAMINTILSGAFAALIYLGV, WTLLLTINACLSGMVAACAGC, ACIWVGLGAGLIYLAFSKLMI, LDAFAVHAGGGFWGLMSSSII, and ICALAIIAWSLGVMLPIFWIL.

Belongs to the ammonia transporter channel (TC 1.A.11.2) family.

It is found in the membrane. In terms of biological role, involved in the uptake of ammonia. The chain is Putative ammonium transporter 1 (amt-1) from Caenorhabditis elegans.